The chain runs to 582 residues: Putative transcriptional regulator HVO_1357 (582 aa).

The Response regulatory domain occupies 19 to 129 (VVLVVDDDED…EVKETVEELL (111 aa)). 4-aspartylphosphate is present on Asp-67. Residues 165–203 (LSDLRSRLEAVRAEHEAAIRNREAQLDRLNRTNELLRDV) adopt a coiled-coil conformation. An HTH bat-type domain is found at 517-569 (LTDRQRTVLETSLVSGYFEWPRGSTAEEVADSLGISPPTLHEHLRTAERKLIE).

In terms of biological role, may be part of a signal-dependent gene regulation cascade that is relevant to swimming motility. May be involved in the transcription regulation of target genes. This is Putative transcriptional regulator HVO_1357 from Haloferax volcanii (strain ATCC 29605 / DSM 3757 / JCM 8879 / NBRC 14742 / NCIMB 2012 / VKM B-1768 / DS2) (Halobacterium volcanii).